A 166-amino-acid chain; its full sequence is Endoribonuclease YbeY (166 aa).

Residues His-130, His-134, and His-140 each coordinate Zn(2+).

It belongs to the endoribonuclease YbeY family. Requires Zn(2+) as cofactor.

Its subcellular location is the cytoplasm. Single strand-specific metallo-endoribonuclease involved in late-stage 70S ribosome quality control and in maturation of the 3' terminus of the 16S rRNA. The protein is Endoribonuclease YbeY of Streptococcus uberis (strain ATCC BAA-854 / 0140J).